The following is a 466-amino-acid chain: 3-isopropylmalate dehydratase large subunit (466 aa).

3 residues coordinate [4Fe-4S] cluster: Cys-347, Cys-407, and Cys-410.

It belongs to the aconitase/IPM isomerase family. LeuC type 1 subfamily. In terms of assembly, heterodimer of LeuC and LeuD. It depends on [4Fe-4S] cluster as a cofactor.

The catalysed reaction is (2R,3S)-3-isopropylmalate = (2S)-2-isopropylmalate. It participates in amino-acid biosynthesis; L-leucine biosynthesis; L-leucine from 3-methyl-2-oxobutanoate: step 2/4. Its function is as follows. Catalyzes the isomerization between 2-isopropylmalate and 3-isopropylmalate, via the formation of 2-isopropylmaleate. This is 3-isopropylmalate dehydratase large subunit from Shewanella pealeana (strain ATCC 700345 / ANG-SQ1).